Consider the following 71-residue polypeptide: Long neurotoxin 2 (71 aa).

Cystine bridges form between Cys-3–Cys-20, Cys-14–Cys-41, Cys-26–Cys-30, Cys-45–Cys-56, and Cys-57–Cys-62.

The protein belongs to the three-finger toxin family. Long-chain subfamily. Type II alpha-neurotoxin sub-subfamily. As to expression, expressed by the venom gland.

The protein localises to the secreted. In terms of biological role, binds with high affinity to muscular (alpha-1/CHRNA1) and neuronal (alpha-7/CHRNA7) nicotinic acetylcholine receptor (nAChR) and inhibits acetylcholine from binding to the receptor, thereby impairing neuromuscular and neuronal transmission. In Naja naja (Indian cobra), this protein is Long neurotoxin 2.